Here is a 704-residue protein sequence, read N- to C-terminus: Ion-translocating oxidoreductase complex subunit C (704 aa).

2 consecutive 4Fe-4S ferredoxin-type domains span residues 368 to 397 (MGAP…QQLY) and 407 to 436 (KATA…VQYF). [4Fe-4S] cluster contacts are provided by Cys-377, Cys-380, Cys-383, Cys-387, Cys-416, Cys-419, Cys-422, and Cys-426. Residues 535 to 684 (ARAKQAAHPM…PADPRKAAVA (150 aa)) form a disordered region. Positions 556 to 565 (KAAVEAAIAR) are enriched in low complexity.

It belongs to the 4Fe4S bacterial-type ferredoxin family. RnfC subfamily. As to quaternary structure, the complex is composed of six subunits: RsxA, RsxB, RsxC, RsxD, RsxE and RsxG. [4Fe-4S] cluster serves as cofactor.

It localises to the cell inner membrane. Part of a membrane-bound complex that couples electron transfer with translocation of ions across the membrane. Required to maintain the reduced state of SoxR. This Salmonella paratyphi C (strain RKS4594) protein is Ion-translocating oxidoreductase complex subunit C.